The following is a 394-amino-acid chain: uncharacterized protein (394 aa).

Asparagine 3, asparagine 14, asparagine 20, and asparagine 25 each carry an N-linked (GlcNAc...) asparagine glycan. A run of 6 helical transmembrane segments spans residues 64–84 (AVGI…LVNI), 101–121 (FIWI…YIDV), 133–153 (IFSF…WHVI), 180–200 (IFVV…MGFF), 228–248 (VLLA…SFVY), and 256–276 (WVGM…QFLE). Asparagine 283 and asparagine 286 each carry an N-linked (GlcNAc...) asparagine glycan. The helical transmembrane segment at 291–311 (AGLVFGLGFCPPLILAYTVCI) threads the bilayer. The N-linked (GlcNAc...) asparagine glycan is linked to asparagine 344.

It is found in the membrane. This is an uncharacterized protein from Schizosaccharomyces pombe (strain 972 / ATCC 24843) (Fission yeast).